Consider the following 90-residue polypeptide: Probable Fe(2+)-trafficking protein (90 aa).

Belongs to the Fe(2+)-trafficking protein family.

In terms of biological role, could be a mediator in iron transactions between iron acquisition and iron-requiring processes, such as synthesis and/or repair of Fe-S clusters in biosynthetic enzymes. In Acinetobacter baylyi (strain ATCC 33305 / BD413 / ADP1), this protein is Probable Fe(2+)-trafficking protein.